The sequence spans 218 residues: Large ribosomal subunit protein uL4 (218 aa).

The interval 46–100 is disordered; the sequence is ARQGTHSTKTRAEVRGGGRKPFRQKGTGRARQGSIRAPHFTGGGISHGPKPRDYA. A compositionally biased stretch (basic residues) spans 62 to 73; it reads GGRKPFRQKGTG.

The protein belongs to the universal ribosomal protein uL4 family. As to quaternary structure, part of the 50S ribosomal subunit.

Its function is as follows. One of the primary rRNA binding proteins, this protein initially binds near the 5'-end of the 23S rRNA. It is important during the early stages of 50S assembly. It makes multiple contacts with different domains of the 23S rRNA in the assembled 50S subunit and ribosome. Functionally, forms part of the polypeptide exit tunnel. In Corynebacterium efficiens (strain DSM 44549 / YS-314 / AJ 12310 / JCM 11189 / NBRC 100395), this protein is Large ribosomal subunit protein uL4.